Here is a 145-residue protein sequence, read N- to C-terminus: Putative pre-16S rRNA nuclease (145 aa).

This sequence belongs to the YqgF nuclease family.

The protein localises to the cytoplasm. Functionally, could be a nuclease involved in processing of the 5'-end of pre-16S rRNA. This Prochlorococcus marinus (strain MIT 9211) protein is Putative pre-16S rRNA nuclease.